We begin with the raw amino-acid sequence, 177 residues long: Large ribosomal subunit protein uL6 (177 aa).

Over residues 156–171 (PYKGKGVRYDTETIRR) the composition is skewed to basic and acidic residues. Residues 156–177 (PYKGKGVRYDTETIRRKEGKKK) form a disordered region.

This sequence belongs to the universal ribosomal protein uL6 family. In terms of assembly, part of the 50S ribosomal subunit.

Functionally, this protein binds to the 23S rRNA, and is important in its secondary structure. It is located near the subunit interface in the base of the L7/L12 stalk, and near the tRNA binding site of the peptidyltransferase center. The polypeptide is Large ribosomal subunit protein uL6 (Gluconacetobacter diazotrophicus (strain ATCC 49037 / DSM 5601 / CCUG 37298 / CIP 103539 / LMG 7603 / PAl5)).